Consider the following 423-residue polypeptide: MRAPGSGRLALPLLLLAVVALAEGDAKGLKEGETPGNFMEDEQWLSSISQYSGKIKHWNRFRDEVEDDYIKSWEDNQQGDEALDTTKDPCQKVKCSRHKVCVAQGYQRAMCISRKKLEHRIKQPSLKLHGGKDSVCKPCHMAQLASVCGSDGHTYSSVCKLEQQACLSSKQLAVRCEGPCPCPTEQSTASTTDSKSETCTGQDLADLGDRLRDWFQLLRENSKQNGSANSATNPAGLDKSLGASCKDSIGWMFSKLDTSGDLFLDQTELAAINLDKYEVCIRPFFNSCDTYKDGRVSTAEWCFCFWREKPPCLAELERTQIQEAAKKKPGVFIPSCDEDGYYRKMQCDQSRGDCWCVDQLGLELTGTRMHGTPDCDDIVGFSGDFGSGVGWEDEEEKETEEAGEEAEEEEGEAGEADDGGYIW.

The first 22 residues, 1 to 22, serve as a signal peptide directing secretion; the sequence is MRAPGSGRLALPLLLLAVVALA. The residue at position 72 (serine 72) is a Phosphoserine. Cystine bridges form between cysteine 90–cysteine 101, cysteine 95–cysteine 111, cysteine 136–cysteine 166, cysteine 139–cysteine 159, and cysteine 148–cysteine 180. The Kazal-like domain maps to 130 to 182; sequence GGKDSVCKPCHMAQLASVCGSDGHTYSSVCKLEQQACLSSKQLAVRCEGPCPC. N-linked (GlcNAc...) asparagine glycosylation occurs at asparagine 225. One can recognise a Thyroglobulin type-1 domain in the interval 309-375; it reads KPPCLAELER…GTRMHGTPDC (67 aa). 3 disulfides stabilise this stretch: cysteine 312–cysteine 336, cysteine 347–cysteine 354, and cysteine 356–cysteine 375. Serine 382 and serine 387 each carry an O-linked (Xyl...) (glycosaminoglycan) serine glycan. The tract at residues 387 to 423 is disordered; the sequence is SGVGWEDEEEKETEEAGEEAEEEEGEAGEADDGGYIW. Acidic residues predominate over residues 391-423; that stretch reads WEDEEEKETEEAGEEAEEEEGEAGEADDGGYIW.

In terms of processing, O-glycosylated; contains chondroitin sulfate and heparan sulfate. As to expression, brain specific.

The protein localises to the secreted. It is found in the extracellular space. Its subcellular location is the extracellular matrix. Its function is as follows. May participate in diverse steps of neurogenesis. Binds calcium. The protein is Testican-2 (Spock2) of Mus musculus (Mouse).